The sequence spans 1578 residues: Chitinase ChiA (1578 aa).

An N-terminal signal peptide occupies residues 1–19 (MKHYYRLLFLLLFPLLASA). A GH18 1 domain is found at 25–466 (KKVVGYYAQW…NQVDTSFGSV (442 aa)). A GH18N region spans residues 26-446 (KVVGYYAQWS…GGMIWELSQD (421 aa)). Residues 92–93 (DA) and 119–122 (GGWT) contribute to the chitin site. E162 functions as the Proton donor in the catalytic mechanism. Residues Y163, 249-252 (FGYD), and W441 contribute to the chitin site. Positions 485 to 536 (TDVTVELRNASNAVIQTVVSANGNFAFNNLTSGQNYSLTALKATYTFTPVTL) constitute a CNA-B domain. A GH18C region spans residues 1142–1462 (KIILGYAHSW…GLMTWSVNWD (321 aa)). Residues 1142–1483 (KIILGYAHSW…KAYAAYFASQ (342 aa)) form the GH18 2 domain. The Proton donor role is filled by E1264. Positions 1473 to 1578 (SKAYAAYFAS…KSFKVMNFLN (106 aa)) are CTD.

It belongs to the glycosyl hydrolase 18 family. Chitinase class II subfamily.

Its subcellular location is the secreted. It carries out the reaction Random endo-hydrolysis of N-acetyl-beta-D-glucosaminide (1-&gt;4)-beta-linkages in chitin and chitodextrins.. Major extracellular chitinase, which is essential for chitin utilization. This Flavobacterium johnsoniae (strain ATCC 17061 / DSM 2064 / JCM 8514 / BCRC 14874 / CCUG 350202 / NBRC 14942 / NCIMB 11054 / UW101) (Cytophaga johnsonae) protein is Chitinase ChiA (chiA).